We begin with the raw amino-acid sequence, 222 residues long: Eukaryotic translation initiation factor 3 subunit K (222 aa).

The PCI domain maps to 46–208 (YDLEANLAVL…KIKTKNITEK (163 aa)).

It belongs to the eIF-3 subunit K family. Component of the eukaryotic translation initiation factor 3 (eIF-3) complex. The eIF-3 complex interacts with pix.

The protein resides in the cytoplasm. Its function is as follows. Component of the eukaryotic translation initiation factor 3 (eIF-3) complex, which is involved in protein synthesis of a specialized repertoire of mRNAs and, together with other initiation factors, stimulates binding of mRNA and methionyl-tRNAi to the 40S ribosome. The eIF-3 complex specifically targets and initiates translation of a subset of mRNAs involved in cell proliferation. The polypeptide is Eukaryotic translation initiation factor 3 subunit K (Drosophila yakuba (Fruit fly)).